A 185-amino-acid chain; its full sequence is MISDIRKDAEVRMEKCVEAFKTQISKVRTGRASPSLLDGIVVEYYGTLTPLRQLASVTVEDSRTLKINVFDRSMGPAVEKAIMASDLGLNPSSAGTDICVPLPPLTEERRKDLTKIVRGEAEQARVAVRNVRRDANDKVKALLKDKAISEDDDRRSQEEVQKMTDAAIKKVDAALADKEAELMQF.

The protein belongs to the RRF family.

It is found in the cytoplasm. Functionally, responsible for the release of ribosomes from messenger RNA at the termination of protein biosynthesis. May increase the efficiency of translation by recycling ribosomes from one round of translation to another. The sequence is that of Ribosome-recycling factor from Salmonella paratyphi A (strain ATCC 9150 / SARB42).